The primary structure comprises 251 residues: MNLNSIPAFDDNYIWVLNDEAGRCLIVDPGDAEPVLNAISANNWQPEAIFLTHHHHDHVGGVKELVEKFPQIVVYGPQETQDKGTTQVVKDGETAFVLGHEFSVIATPGHTLGHICYFSKPYLFCGDTLFSGGCGRLFEGTPSQMYQSLKKLSALPDDTLVCCAHEYTLSNMKFALSILPHDLSINDYYRKVKELRAKNQITLPVILKNERQINVFLRTEDIDLINVINEETLLQQPEERFAWLRSKKDRF.

Zn(2+) contacts are provided by His53, His55, Asp57, His58, His110, Asp127, and His165.

It belongs to the metallo-beta-lactamase superfamily. Glyoxalase II family. As to quaternary structure, monomer. Zn(2+) is required as a cofactor.

The enzyme catalyses an S-(2-hydroxyacyl)glutathione + H2O = a 2-hydroxy carboxylate + glutathione + H(+). Its pathway is secondary metabolite metabolism; methylglyoxal degradation; (R)-lactate from methylglyoxal: step 2/2. In terms of biological role, thiolesterase that catalyzes the hydrolysis of S-D-lactoyl-glutathione to form glutathione and D-lactic acid. The chain is Hydroxyacylglutathione hydrolase from Escherichia coli O6:K15:H31 (strain 536 / UPEC).